The primary structure comprises 299 residues: MITFLYIFFSILIMVLFVLGNFANGFIALVNFIDWVKRKKISSADQILTALAVSRIGLLWTLLLNWYLTVLNPAFYSVELRITSYNAWVVTNHFSMWLAASLSIFYLLKIANFSNLIFLHLKRRVRSVILVILLGTLIFLVCHLLVANMDESMWAEEYEGNITGKMKLRNTVHLSYLTVTTLWSFIPFTLSLISFLMLICSLCKHLKKMQLHGEGSQDLSTKVHIKALQTLISFLLLCAIFFLFLIISVWSPRRLRNDPVVMVSKAVGNIYLAFDSFILIWRTKKLKHTFLLILCQIRC.

Residue M1 is a topological domain, extracellular. The helical transmembrane segment at 2–22 (ITFLYIFFSILIMVLFVLGNF) threads the bilayer. Topologically, residues 23-55 (ANGFIALVNFIDWVKRKKISSADQILTALAVSR) are cytoplasmic. Residues 56-76 (IGLLWTLLLNWYLTVLNPAFY) traverse the membrane as a helical segment. Topologically, residues 77 to 87 (SVELRITSYNA) are extracellular. Residues 88 to 108 (WVVTNHFSMWLAASLSIFYLL) traverse the membrane as a helical segment. Residues 109 to 126 (KIANFSNLIFLHLKRRVR) are Cytoplasmic-facing. Residues 127–147 (SVILVILLGTLIFLVCHLLVA) traverse the membrane as a helical segment. At 148 to 181 (NMDESMWAEEYEGNITGKMKLRNTVHLSYLTVTT) the chain is on the extracellular side. A glycan (N-linked (GlcNAc...) asparagine) is linked at N161. A helical membrane pass occupies residues 182–202 (LWSFIPFTLSLISFLMLICSL). The Cytoplasmic portion of the chain corresponds to 203–229 (CKHLKKMQLHGEGSQDLSTKVHIKALQ). Residues 230–250 (TLISFLLLCAIFFLFLIISVW) traverse the membrane as a helical segment. At 251 to 259 (SPRRLRNDP) the chain is on the extracellular side. Residues 260–280 (VVMVSKAVGNIYLAFDSFILI) traverse the membrane as a helical segment. Residues 281-299 (WRTKKLKHTFLLILCQIRC) are Cytoplasmic-facing.

This sequence belongs to the G-protein coupled receptor T2R family.

Its subcellular location is the membrane. Receptor that may play a role in the perception of bitterness and is gustducin-linked. May play a role in sensing the chemical composition of the gastrointestinal content. The activity of this receptor may stimulate alpha gustducin, mediate PLC-beta-2 activation and lead to the gating of TRPM5. This Pan paniscus (Pygmy chimpanzee) protein is Taste receptor type 2 member 50 (TAS2R50).